We begin with the raw amino-acid sequence, 230 residues long: Thymidylate kinase (230 aa).

20–27 provides a ligand contact to ATP; the sequence is GGEGAGKS.

Belongs to the thymidylate kinase family.

It catalyses the reaction dTMP + ATP = dTDP + ADP. Phosphorylation of dTMP to form dTDP in both de novo and salvage pathways of dTTP synthesis. The protein is Thymidylate kinase of Rhodopseudomonas palustris (strain TIE-1).